A 446-amino-acid polypeptide reads, in one-letter code: N-succinylarginine dihydrolase (446 aa).

Substrate is bound by residues 19 to 28 (AGLSFGNVAS), Asn-110, and 137 to 138 (HR). Glu-174 is an active-site residue. Arg-213 is a binding site for substrate. His-249 is a catalytic residue. The substrate site is built by Asp-251 and Asn-364. Cys-370 functions as the Nucleophile in the catalytic mechanism.

Belongs to the succinylarginine dihydrolase family. In terms of assembly, homodimer.

The catalysed reaction is N(2)-succinyl-L-arginine + 2 H2O + 2 H(+) = N(2)-succinyl-L-ornithine + 2 NH4(+) + CO2. It participates in amino-acid degradation; L-arginine degradation via AST pathway; L-glutamate and succinate from L-arginine: step 2/5. Functionally, catalyzes the hydrolysis of N(2)-succinylarginine into N(2)-succinylornithine, ammonia and CO(2). This is N-succinylarginine dihydrolase from Burkholderia cenocepacia (strain ATCC BAA-245 / DSM 16553 / LMG 16656 / NCTC 13227 / J2315 / CF5610) (Burkholderia cepacia (strain J2315)).